Here is a 367-residue protein sequence, read N- to C-terminus: Probable protein phosphatase 2C 67 (367 aa).

The interval 1–79 (MAHQKREATS…DEKAATNSNV (79 aa)) is disordered. Basic and acidic residues predominate over residues 31-46 (AEKEHILTSDASHETN). Residues 91-365 (EADAAEDKGC…DNCTAVLIVF (275 aa)) form the PPM-type phosphatase domain. 4 residues coordinate Mn(2+): Asp131, Gly132, Asp312, and Asp356.

This sequence belongs to the PP2C family. Requires Mg(2+) as cofactor. Mn(2+) serves as cofactor.

The catalysed reaction is O-phospho-L-seryl-[protein] + H2O = L-seryl-[protein] + phosphate. The enzyme catalyses O-phospho-L-threonyl-[protein] + H2O = L-threonyl-[protein] + phosphate. This is Probable protein phosphatase 2C 67 from Oryza sativa subsp. japonica (Rice).